A 578-amino-acid polypeptide reads, in one-letter code: Probable multidrug ABC transporter ATP-binding protein YbhF (578 aa).

2 ABC transporter domains span residues 6–237 (ITLN…LMTS) and 330–559 (IEAK…PDPT). Residues 40 to 47 (GPDGAGKT) and 362 to 369 (GPNGAGKS) each bind ATP.

It belongs to the ABC transporter superfamily. As to quaternary structure, the complex is probably composed of two ATP-binding proteins (YbhF) and two transmembrane proteins (YbhR and YbhS).

Part of the ABC transporter complex YbhFSR that could be involved in efflux of cefoperazone. Probably responsible for energy coupling to the transport system. The sequence is that of Probable multidrug ABC transporter ATP-binding protein YbhF (ybhF) from Escherichia coli (strain K12).